Consider the following 140-residue polypeptide: Sex-regulated protein janus-B (140 aa).

Arginine 42 lines the substrate pocket. Residue histidine 69 is the Proton acceptor of the active site. Substrate is bound at residue 110 to 112 (SRT).

The protein belongs to the janus family.

In terms of biological role, janA and janB regulate somatic sex differentiation. In Drosophila sechellia (Fruit fly), this protein is Sex-regulated protein janus-B (janB).